The following is a 445-amino-acid chain: Exodeoxyribonuclease 7 large subunit (445 aa).

It belongs to the XseA family. Heterooligomer composed of large and small subunits.

It is found in the cytoplasm. The catalysed reaction is Exonucleolytic cleavage in either 5'- to 3'- or 3'- to 5'-direction to yield nucleoside 5'-phosphates.. Bidirectionally degrades single-stranded DNA into large acid-insoluble oligonucleotides, which are then degraded further into small acid-soluble oligonucleotides. In Staphylococcus aureus (strain USA300 / TCH1516), this protein is Exodeoxyribonuclease 7 large subunit.